The chain runs to 307 residues: 4-hydroxythreonine-4-phosphate dehydrogenase (307 aa).

Positions 126 and 127 each coordinate substrate. Positions 156, 195, and 251 each coordinate a divalent metal cation. Substrate is bound by residues K259, N268, and R277.

The protein belongs to the PdxA family. In terms of assembly, homodimer. It depends on Zn(2+) as a cofactor. Requires Mg(2+) as cofactor. The cofactor is Co(2+).

It localises to the cytoplasm. The enzyme catalyses 4-(phosphooxy)-L-threonine + NAD(+) = 3-amino-2-oxopropyl phosphate + CO2 + NADH. Its pathway is cofactor biosynthesis; pyridoxine 5'-phosphate biosynthesis; pyridoxine 5'-phosphate from D-erythrose 4-phosphate: step 4/5. Functionally, catalyzes the NAD(P)-dependent oxidation of 4-(phosphooxy)-L-threonine (HTP) into 2-amino-3-oxo-4-(phosphooxy)butyric acid which spontaneously decarboxylates to form 3-amino-2-oxopropyl phosphate (AHAP). The sequence is that of 4-hydroxythreonine-4-phosphate dehydrogenase from Helicobacter pylori (strain HPAG1).